The sequence spans 297 residues: B-lymphocyte antigen CD20 (297 aa).

The Cytoplasmic portion of the chain corresponds to 1–51; it reads MTTPRNSMSGTLPVDPMKSPTAMYPVQKIIPKRMPSVVGPTQNFFMRESKT. A Phosphoserine modification is found at serine 36. The helical transmembrane segment at 52-72 threads the bilayer; sequence LGAVQIMNGLFHIALGSLLMI. The Extracellular portion of the chain corresponds to 73–75; it reads HTD. Residues 76–96 traverse the membrane as a helical segment; sequence VCAPICITMWYPLWGGIMFII. The Cytoplasmic portion of the chain corresponds to 97 to 122; the sequence is SGSLLAAADKNPRKSLVKGKMIMNSL. A helical transmembrane segment spans residues 123–143; the sequence is SLFAAISGIIFLIMDIFNITI. Residues 144-188 lie on the Extracellular side of the membrane; that stretch reads SHFFKMENLNLIKAPMPYVDIHNCDPANPSEKNSLSIQYCGSIRS. The helical transmembrane segment at 189 to 209 threads the bilayer; it reads VFLGVFAVMLIFAFFQKLVTA. At 210–297 the chain is on the cytoplasmic side; the sequence is GIVENEWKKL…SSPIENDSIP (88 aa). Residue cysteine 220 is the site of S-palmitoyl cysteine attachment. Phosphoserine is present on serine 225. Positions 274 to 297 are disordered; it reads ELEINFAEPPQEQESSPIENDSIP. Low complexity predominate over residues 281–290; that stretch reads EPPQEQESSP.

Belongs to the MS4A family. Forms homotetramers. Interacts with the heavy and light chains of cell surface IgM, the antigen-binding components of the BCR. Post-translationally, phosphorylated. Might be functionally regulated by protein kinase(s). Expressed in PBMCs and lymph node from healthy dogs, in B-cells of canine lymphoma, but not in T-cell lymphoma cells and non-T and non-B-cell lymphoma cells.

It localises to the cell membrane. Functionally, B-lymphocyte-specific membrane protein that plays a role in the regulation of cellular calcium influx necessary for the development, differentiation, and activation of B-lymphocytes. Functions as a store-operated calcium (SOC) channel component promoting calcium influx after activation by the B-cell receptor/BCR. The polypeptide is B-lymphocyte antigen CD20 (MS4A1) (Canis lupus familiaris (Dog)).